A 252-amino-acid polypeptide reads, in one-letter code: NAC domain-containing protein 23 (252 aa).

Positions 12-177 (MPPGFRFQPT…EMVLCRISNK (166 aa)) constitute an NAC domain. The DNA-binding element occupies 110–183 (TAVKRRFVFY…ISNKDLPKPP (74 aa)). The segment at 225–252 (VDDAAAGTDDPGDLDEEIDDSMQRNHGG) is disordered. The span at 234–244 (DPGDLDEEIDD) shows a compositional bias: acidic residues.

Forms heterodimers with NAC26. Expressed in stems and panicles. Expressed in developing endosperm.

It localises to the nucleus. The protein localises to the cytoplasm. In terms of biological role, transcription factor involved in the regulation of seed size. Binds to DNA-specific sequences of CLPD1 and OAT promoters in vitro. In Oryza sativa subsp. japonica (Rice), this protein is NAC domain-containing protein 23.